A 631-amino-acid polypeptide reads, in one-letter code: Phosphomethylpyrimidine synthase (631 aa).

Substrate contacts are provided by residues N239, M268, Y297, H333, S353–G355, D394–R397, and E433. Zn(2+) is bound at residue H437. Y460 contacts substrate. H501 provides a ligand contact to Zn(2+). [4Fe-4S] cluster is bound by residues C581, C584, and C589.

Belongs to the ThiC family. Homodimer. [4Fe-4S] cluster serves as cofactor.

It carries out the reaction 5-amino-1-(5-phospho-beta-D-ribosyl)imidazole + S-adenosyl-L-methionine = 4-amino-2-methyl-5-(phosphooxymethyl)pyrimidine + CO + 5'-deoxyadenosine + formate + L-methionine + 3 H(+). It participates in cofactor biosynthesis; thiamine diphosphate biosynthesis. In terms of biological role, catalyzes the synthesis of the hydroxymethylpyrimidine phosphate (HMP-P) moiety of thiamine from aminoimidazole ribotide (AIR) in a radical S-adenosyl-L-methionine (SAM)-dependent reaction. The polypeptide is Phosphomethylpyrimidine synthase (Escherichia coli O7:K1 (strain IAI39 / ExPEC)).